A 214-amino-acid polypeptide reads, in one-letter code: Methyltransferase HEMK2 (214 aa).

Residues Thr-29, Glu-51, Gly-53, Asp-77, Asp-103, Leu-104, and Asn-122 each contribute to the S-adenosyl-L-homocysteine site. Residues Thr-29, Glu-51, Gly-53, Asp-77, Asp-103, Leu-104, and Asn-122 each contribute to the S-adenosyl-L-methionine site. Asn-122 lines the a protein pocket.

It belongs to the eukaryotic/archaeal PrmC-related family. As to quaternary structure, heterodimer; heterodimerization with TRMT112 is required for S-adenosyl-L-methionine-binding. In terms of assembly, does not interact with TRMT112. Post-translationally, ubiquitinated, leading to its degradation by the proteasome. As to expression, widely expressed, with highest expression in parathyroid and pituitary glands, followed by adrenal gland and kidney, and lowest expression in leukocytes and mammary gland.

It localises to the nucleus. The enzyme catalyses L-lysyl-[histone] + S-adenosyl-L-methionine = N(6)-methyl-L-lysyl-[histone] + S-adenosyl-L-homocysteine + H(+). It catalyses the reaction L-glutaminyl-[protein] + S-adenosyl-L-methionine = N(5)-methyl-L-glutaminyl-[protein] + S-adenosyl-L-homocysteine + H(+). It carries out the reaction methylarsonous acid + S-adenosyl-L-methionine = dimethylarsinate + S-adenosyl-L-homocysteine + 2 H(+). Functionally, methyltransferase that can methylate proteins and, to a lower extent, arsenic. Catalytic subunit of a heterodimer with TRMT112, which monomethylates 'Lys-12' of histone H4 (H4K12me1), a modification present at the promoters of numerous genes encoding cell cycle regulators. Catalytic subunit of a heterodimer with TRMT112, which catalyzes N5-methylation of Glu residue of proteins with a Gly-Gln-Xaa-Xaa-Xaa-Arg motif. Methylates ETF1 on 'Gln-185'; ETF1 needs to be complexed to ERF3 in its GTP-bound form to be efficiently methylated. May also play a role in the modulation of arsenic-induced toxicity by mediating the conversion of monomethylarsonous acid (3+) into the less toxic dimethylarsonic acid. It however only plays a limited role in arsenic metabolism compared with AS3MT. The chain is Methyltransferase HEMK2 from Homo sapiens (Human).